The following is a 236-amino-acid chain: Purine nucleoside phosphorylase DeoD-type (236 aa).

Histidine 5 lines the a purine D-ribonucleoside pocket. Phosphate-binding positions include glycine 21, arginine 25, arginine 44, and 88–91 (RVGT). A purine D-ribonucleoside contacts are provided by residues 180-182 (EME) and 204-205 (SD). Aspartate 205 acts as the Proton donor in catalysis.

The protein belongs to the PNP/UDP phosphorylase family. As to quaternary structure, homohexamer; trimer of homodimers.

The catalysed reaction is a purine D-ribonucleoside + phosphate = a purine nucleobase + alpha-D-ribose 1-phosphate. It catalyses the reaction a purine 2'-deoxy-D-ribonucleoside + phosphate = a purine nucleobase + 2-deoxy-alpha-D-ribose 1-phosphate. In terms of biological role, catalyzes the reversible phosphorolytic breakdown of the N-glycosidic bond in the beta-(deoxy)ribonucleoside molecules, with the formation of the corresponding free purine bases and pentose-1-phosphate. The protein is Purine nucleoside phosphorylase DeoD-type of Shewanella amazonensis (strain ATCC BAA-1098 / SB2B).